The following is a 253-amino-acid chain: Small ribosomal subunit protein uS3 (253 aa).

The KH type-2 domain occupies 21–92; that stretch reads LNEFLTRELA…SVELYAEKVA (72 aa). The segment at 211 to 253 is disordered; the sequence is VEPKDEILPTTPISEQKGGKPDPQVPQQPPQQPPAMPPPVPTA. Residues 233–253 show a composition bias toward pro residues; sequence PQVPQQPPQQPPAMPPPVPTA.

The protein belongs to the universal ribosomal protein uS3 family.

The protein resides in the cytoplasm. Its subcellular location is the nucleus. It localises to the nucleolus. The protein localises to the mitochondrion inner membrane. It is found in the cytoskeleton. The protein resides in the spindle. It carries out the reaction 2'-deoxyribonucleotide-(2'-deoxyribose 5'-phosphate)-2'-deoxyribonucleotide-DNA = a 3'-end 2'-deoxyribonucleotide-(2,3-dehydro-2,3-deoxyribose 5'-phosphate)-DNA + a 5'-end 5'-phospho-2'-deoxyribonucleoside-DNA + H(+). Its function is as follows. Component of the small ribosomal subunit. The ribosome is a large ribonucleoprotein complex responsible for the synthesis of proteins in the cell. Has endonuclease activity and plays a role in repair of damaged DNA. Also involved in other processes including regulation of transcription, translation of its cognate mRNA, spindle formation and chromosome movement during mitosis, and apoptosis. This is Small ribosomal subunit protein uS3 (RPS3) from Ambystoma mexicanum (Axolotl).